Reading from the N-terminus, the 295-residue chain is Ribosomal RNA small subunit methyltransferase A (295 aa).

Positions 29, 31, 56, 77, 102, and 128 each coordinate S-adenosyl-L-methionine.

Belongs to the class I-like SAM-binding methyltransferase superfamily. rRNA adenine N(6)-methyltransferase family. RsmA subfamily.

Its subcellular location is the cytoplasm. It carries out the reaction adenosine(1518)/adenosine(1519) in 16S rRNA + 4 S-adenosyl-L-methionine = N(6)-dimethyladenosine(1518)/N(6)-dimethyladenosine(1519) in 16S rRNA + 4 S-adenosyl-L-homocysteine + 4 H(+). Functionally, specifically dimethylates two adjacent adenosines (A1518 and A1519) in the loop of a conserved hairpin near the 3'-end of 16S rRNA in the 30S particle. May play a critical role in biogenesis of 30S subunits. This is Ribosomal RNA small subunit methyltransferase A from Listeria monocytogenes serotype 4b (strain CLIP80459).